We begin with the raw amino-acid sequence, 415 residues long: Probable beta-1,4-xylosyltransferase IRX10L (415 aa).

A topological domain (cytoplasmic) is located at residue Met-1. A helical; Signal-anchor for type II membrane protein membrane pass occupies residues 2 to 22 (KLSSCVLIFLLCNTFSSISAF). The Lumenal segment spans residues 23–415 (RLSRSQPTER…AGPVADLKPW (393 aa)). Residues Asn-142 and Asn-403 are each glycosylated (N-linked (GlcNAc...) asparagine).

The protein belongs to the glycosyltransferase 47 family. Present in the xylem and phloem, and, to a lower extent, in interfascicular cells. Expressed in the root tip, shoot apical meristem (SAM), xylem cells of roots and stems, and in the vasculature of roots, cotyledons and leaves.

It is found in the golgi apparatus membrane. In terms of biological role, involved in the synthesis of the hemicellulose glucuronoxylan, a major component of secondary cell walls. Probably involved in the elongation of glucuronoxylan xylosyl backbone. The polypeptide is Probable beta-1,4-xylosyltransferase IRX10L (IRX10L) (Arabidopsis thaliana (Mouse-ear cress)).